The chain runs to 639 residues: CD2-associated protein (639 aa).

In terms of domain architecture, SH3 1; truncated spans 1-59; it reads MVDYIVEYDYDAVHDDELTIRVGEIIRNVKKLQEEGWLEGELNGRRGMFPDNFVKEIKR. The interval 1 to 175 is interaction with ANLN and localization to the midbody; that stretch reads MVDYIVEYDY…EVTDDGETHE (175 aa). K58 participates in a covalent cross-link: Glycyl lysine isopeptide (Lys-Gly) (interchain with G-Cter in SUMO2). 3 positions are modified to phosphoserine: S67, S80, and S86. Positions 108–167 constitute an SH3 2 domain; the sequence is TKKRQCKVLFEYIPQNEDELELKVGDIIDINEEVEEGWWSGTLNNKLGLFPSNFVKELEV. Residues 168–177 show a composition bias toward basic and acidic residues; the sequence is TDDGETHEAQ. The tract at residues 168–209 is disordered; it reads TDDGETHEAQDDSETVLAGPTSPIPSLGNVSETASGSVTQPK. Residues 195-207 are compositionally biased toward polar residues; the sequence is GNVSETASGSVTQ. At S224 the chain carries Phosphoserine. A disordered region spans residues 227 to 256; sequence LRTRTSSSETEEKKPEKPLILQSLGPKTQS. Positions 269–330 constitute an SH3 3 domain; it reads KAKEYCRTLF…PDNFAVQINE (62 aa). The interval 333–428 is disordered; it reads KDFPKPKKPP…PPPPIAKING (96 aa). 3 short sequence motifs (SH3-binding) span residues 336-352, 378-397, and 410-422; these read PKPK…APKP, KPSK…PPTK, and PKRP…PPPP. The span at 341–351 shows a compositional bias: pro residues; that stretch reads PPPPAKAPAPK. The span at 356 to 379 shows a compositional bias: basic and acidic residues; that stretch reads AAEKKYFSLKPEEKDEKSTLEQKP. A compositionally biased stretch (pro residues) spans 385-395; that stretch reads PQVPPKKPTPP. A phosphoserine mark is found at S458, S463, S469, S510, and S514. K523 is covalently cross-linked (Glycyl lysine isopeptide (Lys-Gly) (interchain with G-Cter in SUMO2)). T565 carries the phosphothreonine modification. Residues 577–638 adopt a coiled-coil conformation; the sequence is DVKKNSLDEL…IEKLKKAVLS (62 aa). S582 bears the Phosphoserine mark.

As to quaternary structure, homodimer. Interacts with F-actin, PKD2, NPHS1 and NPHS2. Interacts with WTIP. Interacts with DDN; interaction is direct. Interacts (via SH3 2 domain) with CBL (via phosphorylated C-terminus). Interacts with BCAR1/p130Cas (via SH3 domain). Interacts with MVB12A and ARHGAP17. Interacts with ANLN, CD2 and CBLB. Interacts with PDCD6IP and TSG101. Interacts with RIN3. Interacts directly with RET (inactive) and CBLC; upon RET activation by GDNF suggested to dissociate from RET as CBLC:CD2AP complex. Interacts with CGNL1 and SH3BP1; probably part of a complex at cell junctions. Interacts with CAPZA1. (Microbial infection) Interacts (via SH3 domains) with Chikungunya virus non-structural protein 3 (via C-terminus); this interaction plays a role in initiation of viral replication. In terms of processing, phosphorylated on tyrosine residues; probably by c-Abl, Fyn and c-Src. In terms of tissue distribution, widely expressed in fetal and adult tissues.

Its subcellular location is the cytoplasm. It localises to the cytoskeleton. The protein localises to the cell projection. The protein resides in the ruffle. It is found in the cell junction. Its function is as follows. Seems to act as an adapter protein between membrane proteins and the actin cytoskeleton. In collaboration with CBLC, modulates the rate of RET turnover and may act as regulatory checkpoint that limits the potency of GDNF on neuronal survival. Controls CBLC function, converting it from an inhibitor to a promoter of RET degradation. May play a role in receptor clustering and cytoskeletal polarity in the junction between T-cell and antigen-presenting cell. May anchor the podocyte slit diaphragm to the actin cytoskeleton in renal glomerolus. Also required for cytokinesis. Plays a role in epithelial cell junctions formation. The protein is CD2-associated protein (CD2AP) of Homo sapiens (Human).